We begin with the raw amino-acid sequence, 298 residues long: Elongation factor Ts (298 aa).

Positions 79-82 are involved in Mg(2+) ion dislocation from EF-Tu; it reads TDFV.

The protein belongs to the EF-Ts family.

The protein localises to the cytoplasm. Associates with the EF-Tu.GDP complex and induces the exchange of GDP to GTP. It remains bound to the aminoacyl-tRNA.EF-Tu.GTP complex up to the GTP hydrolysis stage on the ribosome. This Mycoplasma pneumoniae (strain ATCC 29342 / M129 / Subtype 1) (Mycoplasmoides pneumoniae) protein is Elongation factor Ts (tsf).